Here is a 119-residue protein sequence, read N- to C-terminus: Beta-2-microglobulin (119 aa).

A signal peptide spans 1–20; the sequence is MACFVVVALLVLLSLSGLEA. An Ig-like C1-type domain is found at 25 to 114; it reads PKIQVYSRHP…VTFSTPKTVK (90 aa). Cysteine 45 and cysteine 100 are disulfide-bonded.

Belongs to the beta-2-microglobulin family. In terms of assembly, heterodimer of an alpha chain and a beta chain. Beta-2-microglobulin is the beta-chain of major histocompatibility complex class I molecules.

Its subcellular location is the secreted. In terms of biological role, component of the class I major histocompatibility complex (MHC). Involved in the presentation of peptide antigens to the immune system. In Leontopithecus chrysopygus (Golden-rumped lion tamarin), this protein is Beta-2-microglobulin (B2M).